Reading from the N-terminus, the 319-residue chain is 4-hydroxy-3-methylbut-2-enyl diphosphate reductase (319 aa).

Residue Cys-12 participates in [4Fe-4S] cluster binding. Residues His-41 and His-74 each contribute to the (2E)-4-hydroxy-3-methylbut-2-enyl diphosphate site. Positions 41 and 74 each coordinate dimethylallyl diphosphate. Isopentenyl diphosphate contacts are provided by His-41 and His-74. Cys-97 contributes to the [4Fe-4S] cluster binding site. His-125 serves as a coordination point for (2E)-4-hydroxy-3-methylbut-2-enyl diphosphate. His-125 is a dimethylallyl diphosphate binding site. Isopentenyl diphosphate is bound at residue His-125. Residue Glu-127 is the Proton donor of the active site. Thr-168 is a binding site for (2E)-4-hydroxy-3-methylbut-2-enyl diphosphate. Cys-198 is a binding site for [4Fe-4S] cluster. 4 residues coordinate (2E)-4-hydroxy-3-methylbut-2-enyl diphosphate: Ser-226, Ser-227, Asn-228, and Ser-270. Residues Ser-226, Ser-227, Asn-228, and Ser-270 each contribute to the dimethylallyl diphosphate site. 4 residues coordinate isopentenyl diphosphate: Ser-226, Ser-227, Asn-228, and Ser-270.

This sequence belongs to the IspH family. Homodimer. [4Fe-4S] cluster serves as cofactor.

It catalyses the reaction isopentenyl diphosphate + 2 oxidized [2Fe-2S]-[ferredoxin] + H2O = (2E)-4-hydroxy-3-methylbut-2-enyl diphosphate + 2 reduced [2Fe-2S]-[ferredoxin] + 2 H(+). The enzyme catalyses dimethylallyl diphosphate + 2 oxidized [2Fe-2S]-[ferredoxin] + H2O = (2E)-4-hydroxy-3-methylbut-2-enyl diphosphate + 2 reduced [2Fe-2S]-[ferredoxin] + 2 H(+). The protein operates within isoprenoid biosynthesis; dimethylallyl diphosphate biosynthesis; dimethylallyl diphosphate from (2E)-4-hydroxy-3-methylbutenyl diphosphate: step 1/1. It participates in isoprenoid biosynthesis; isopentenyl diphosphate biosynthesis via DXP pathway; isopentenyl diphosphate from 1-deoxy-D-xylulose 5-phosphate: step 6/6. Its function is as follows. Catalyzes the conversion of 1-hydroxy-2-methyl-2-(E)-butenyl 4-diphosphate (HMBPP) into a mixture of isopentenyl diphosphate (IPP) and dimethylallyl diphosphate (DMAPP). Acts in the terminal step of the DOXP/MEP pathway for isoprenoid precursor biosynthesis. The protein is 4-hydroxy-3-methylbut-2-enyl diphosphate reductase of Hamiltonella defensa subsp. Acyrthosiphon pisum (strain 5AT).